A 104-amino-acid polypeptide reads, in one-letter code: Large ribosomal subunit protein uL24 (104 aa).

It belongs to the universal ribosomal protein uL24 family. In terms of assembly, part of the 50S ribosomal subunit.

Functionally, one of two assembly initiator proteins, it binds directly to the 5'-end of the 23S rRNA, where it nucleates assembly of the 50S subunit. In terms of biological role, one of the proteins that surrounds the polypeptide exit tunnel on the outside of the subunit. The protein is Large ribosomal subunit protein uL24 of Alteromonas mediterranea (strain DSM 17117 / CIP 110805 / LMG 28347 / Deep ecotype).